Reading from the N-terminus, the 119-residue chain is MSNITYEFNENDVIVNNNGMPCIQRPFDKEALYSLLDKMSKEQLDELIEDINDEKRLREFKEEKLKKVRSRMNRELKIYKQELENKKQRMKMLTEQEEEEEEEEEEPPKPKKKVINRKK.

The disordered stretch occupies residues 86 to 119 (KKQRMKMLTEQEEEEEEEEEEPPKPKKKVINRKK). The span at 95 to 106 (EQEEEEEEEEEE) shows a compositional bias: acidic residues. Over residues 110 to 119 (PKKKVINRKK) the composition is skewed to basic residues.

This is an uncharacterized protein from Sputnik virophage.